We begin with the raw amino-acid sequence, 187 residues long: uncharacterized protein (187 aa).

This is an uncharacterized protein from Dictyostelium discoideum (Social amoeba).